A 349-amino-acid chain; its full sequence is Fructose-bisphosphate aldolase 2, chloroplastic (349 aa).

Positions 47 and 137 each coordinate substrate. The active-site Proton acceptor is the Glu177. The Schiff-base intermediate with dihydroxyacetone-P role is filled by Lys219.

It belongs to the class I fructose-bisphosphate aldolase family.

Its subcellular location is the plastid. The protein resides in the chloroplast. The catalysed reaction is beta-D-fructose 1,6-bisphosphate = D-glyceraldehyde 3-phosphate + dihydroxyacetone phosphate. Its pathway is carbohydrate degradation; glycolysis; D-glyceraldehyde 3-phosphate and glycerone phosphate from D-glucose: step 4/4. The protein is Fructose-bisphosphate aldolase 2, chloroplastic of Pisum sativum (Garden pea).